The primary structure comprises 343 residues: Single-pass membrane and coiled-coil domain-containing protein 2 (343 aa).

The span at 86–99 shows a compositional bias: basic and acidic residues; sequence EHDQDLSKQDKQET. Positions 86–108 are disordered; sequence EHDQDLSKQDKQETDVDEDPQAS. A coiled-coil region spans residues 152-238; it reads TEKIDNIIKK…SAKLRMYQME (87 aa). Residues 284–304 form a helical membrane-spanning segment; that stretch reads IFIMFDVLTVTGLLCYILFFG.

It localises to the membrane. This chain is Single-pass membrane and coiled-coil domain-containing protein 2 (SMCO2), found in Homo sapiens (Human).